The primary structure comprises 362 residues: Methylthioribose-1-phosphate isomerase (362 aa).

Asp252 serves as the catalytic Proton donor.

The protein belongs to the eIF-2B alpha/beta/delta subunits family. MtnA subfamily.

The protein localises to the cytoplasm. It is found in the nucleus. It catalyses the reaction 5-(methylsulfanyl)-alpha-D-ribose 1-phosphate = 5-(methylsulfanyl)-D-ribulose 1-phosphate. The protein operates within amino-acid biosynthesis; L-methionine biosynthesis via salvage pathway; L-methionine from S-methyl-5-thio-alpha-D-ribose 1-phosphate: step 1/6. In terms of biological role, catalyzes the interconversion of methylthioribose-1-phosphate (MTR-1-P) into methylthioribulose-1-phosphate (MTRu-1-P). The chain is Methylthioribose-1-phosphate isomerase from Drosophila persimilis (Fruit fly).